The primary structure comprises 531 residues: MAMKNLLSLARRSQRRLFLTQATRSSSSFSAIDSVPASASPTALSPPPPHLMPYDHAAEIIKNKIKKLENPDKRFLKYASPHPILASHNHILSAPETRVTTLPNGLRVATESNLSAKTATVGVWIDAGSRFESDETNGTAHFLEHMIFKGTDRRTVRALEEEIEDIGGHLNAYTSREQTTYYAKVLDSNVNQALDVLADILQNSKFEEQRINRERDVILREMQEVEGQTDEVVLDHLHATAFQYTPLGRTILGPAQNVKSITREDLQNYIKTHYTASRMVIAAAGAVKHEEVVEQVKKLFTKLSSDPTTTSQLVANEPASFTGSEVRMIDDDLPLAQFAVAFEGASWTDPDSVALMVMQTMLGSWNKNVGGGKHVGSDLTQRVAINEIAESIMAFNTNYKDTGLFGVYAVAKADCLDDLSYAIMYEVTKLAYRVSDADVTRARNQLKSSLLLHMDGTSPIAEDIGRQLLTYGRRIPTAELFARIDAVDASTVKRVANKYIYDKDIAISAIGPIQDLPDYNKFRRRTYWNRY.

Residues 1-78 (MAMKNLLSLA…ENPDKRFLKY (78 aa)) constitute a mitochondrion transit peptide. The segment at 30-50 (SAIDSVPASASPTALSPPPPH) is disordered. Zn(2+) is bound at residue H141. The Proton acceptor role is filled by E144. H145 provides a ligand contact to Zn(2+). Residue E214 is part of the active site. Zn(2+) is bound at residue E221.

Belongs to the peptidase M16 family. As to quaternary structure, heterodimer of an alpha subunit and a beta subunit subunits, forming the mitochondrial processing protease (MPP) in which the alpha subunit is involved in substrate recognition and binding and the beta subunit is the catalytic subunit. Component of the ubiquinol-cytochrome c oxidoreductase (cytochrome b-c1 complex, complex III, CIII), a multisubunit enzyme composed of 10 subunits. The complex is composed of 3 respiratory subunits cytochrome b (MT-CYB), cytochrome c1 (CYC1-1 or CYC1-2) and Rieske protein (UCR1-1 or UCR1-2), 2 core protein subunits MPPalpha1 (or MPPalpha2) and MPPB, and 5 low-molecular weight protein subunits QCR7-1 (or QCR7-2), UCRQ-1 (or UCRQ-2), QCR9, UCRY and probably QCR6-1 (or QCR6-2). The complex exists as an obligatory dimer and forms supercomplexes (SCs) in the inner mitochondrial membrane with NADH-ubiquinone oxidoreductase (complex I, CI), resulting in different assemblies (supercomplexes SCI(1)III(2) and SCI(2)III(4)). Zn(2+) is required as a cofactor.

It is found in the mitochondrion. It localises to the mitochondrion inner membrane. It catalyses the reaction Release of N-terminal transit peptides from precursor proteins imported into the mitochondrion, typically with Arg in position P2.. Binding to the alpha subunit is required for catalytic activity. Catalytic subunit of the essential mitochondrial processing protease (MPP), which cleaves the mitochondrial sequence off newly imported precursors proteins. Preferentially, cleaves after an arginine at position P2. Functionally, component of the ubiquinol-cytochrome c oxidoreductase, a multisubunit transmembrane complex that is part of the mitochondrial electron transport chain which drives oxidative phosphorylation. The respiratory chain contains 3 multisubunit complexes succinate dehydrogenase (complex II, CII), ubiquinol-cytochrome c oxidoreductase (cytochrome b-c1 complex, complex III, CIII) and cytochrome c oxidase (complex IV, CIV), that cooperate to transfer electrons derived from NADH and succinate to molecular oxygen, creating an electrochemical gradient over the inner membrane that drives transmembrane transport and the ATP synthase. The cytochrome b-c1 complex catalyzes electron transfer from ubiquinol to cytochrome c, linking this redox reaction to translocation of protons across the mitochondrial inner membrane, with protons being carried across the membrane as hydrogens on the quinol. In the process called Q cycle, 2 protons are consumed from the matrix, 4 protons are released into the intermembrane space and 2 electrons are passed to cytochrome c. This chain is Probable mitochondrial-processing peptidase subunit beta, mitochondrial (MPPbeta), found in Arabidopsis thaliana (Mouse-ear cress).